A 173-amino-acid polypeptide reads, in one-letter code: Galactose-6-phosphate isomerase subunit LacB (173 aa).

The protein belongs to the LacAB/RpiB family. Heteromultimeric protein consisting of LacA and LacB.

The enzyme catalyses aldehydo-D-galactose 6-phosphate = keto-D-tagatose 6-phosphate. It functions in the pathway carbohydrate metabolism; D-galactose 6-phosphate degradation; D-tagatose 6-phosphate from D-galactose 6-phosphate: step 1/1. This chain is Galactose-6-phosphate isomerase subunit LacB, found in Clostridium acetobutylicum (strain ATCC 824 / DSM 792 / JCM 1419 / IAM 19013 / LMG 5710 / NBRC 13948 / NRRL B-527 / VKM B-1787 / 2291 / W).